The sequence spans 67 residues: Large ribosomal subunit protein bL35 (67 aa).

The span at 1-16 (MPKMKTKSGAKKRFRV) shows a compositional bias: basic residues. Residues 1-25 (MPKMKTKSGAKKRFRVRPGGTVKRG) are disordered.

It belongs to the bacterial ribosomal protein bL35 family.

The protein is Large ribosomal subunit protein bL35 of Polaromonas sp. (strain JS666 / ATCC BAA-500).